Here is a 302-residue protein sequence, read N- to C-terminus: Sulfate adenylyltransferase subunit 2 (302 aa).

Residues 280-302 (RQGRAIDHDQSGSMELKKRQGYF) form a disordered region.

It belongs to the PAPS reductase family. CysD subfamily. Heterodimer composed of CysD, the smaller subunit, and CysN.

The enzyme catalyses sulfate + ATP + H(+) = adenosine 5'-phosphosulfate + diphosphate. It functions in the pathway sulfur metabolism; hydrogen sulfide biosynthesis; sulfite from sulfate: step 1/3. In terms of biological role, with CysN forms the ATP sulfurylase (ATPS) that catalyzes the adenylation of sulfate producing adenosine 5'-phosphosulfate (APS) and diphosphate, the first enzymatic step in sulfur assimilation pathway. APS synthesis involves the formation of a high-energy phosphoric-sulfuric acid anhydride bond driven by GTP hydrolysis by CysN coupled to ATP hydrolysis by CysD. The sequence is that of Sulfate adenylyltransferase subunit 2 from Vibrio cholerae serotype O1 (strain ATCC 39315 / El Tor Inaba N16961).